We begin with the raw amino-acid sequence, 304 residues long: Transmembrane protein 178A (304 aa).

A signal peptide spans 1 to 25 (MESRGLVTAVSLTLSICSLLLLVTA). Over 26 to 186 (IFTDHWYETD…LLHLRRITAG (161 aa)) the chain is Extracellular. N-linked (GlcNAc...) asparagine glycosylation is present at asparagine 165. A helical transmembrane segment spans residues 187–207 (FLGMAAAVLLCGCIVAAISFF). Topologically, residues 208–215 (WEESLTQH) are cytoplasmic. Residues 216–236 (VAGLLFLMTGIFCTISLCTYA) traverse the membrane as a helical segment. Residues 237-267 (ASVAYELNRQPKFIYGLPSDVEHGYSWSLFC) lie on the Extracellular side of the membrane. Residues 268 to 288 (AWCSLGLIVAAGCLCTAYPFI) traverse the membrane as a helical segment. Residues 289-304 (SRTKILHLKFARDSCV) are Cytoplasmic-facing.

This sequence belongs to the TMEM178 family.

It localises to the endoplasmic reticulum membrane. In terms of biological role, may act as a negative regulator of osteoclast differentiation. This is Transmembrane protein 178A (tmem178a) from Xenopus laevis (African clawed frog).